The following is a 391-amino-acid chain: Tryptophan synthase beta chain (391 aa).

An N6-(pyridoxal phosphate)lysine modification is found at Lys-84.

This sequence belongs to the TrpB family. In terms of assembly, tetramer of two alpha and two beta chains. Pyridoxal 5'-phosphate serves as cofactor.

It catalyses the reaction (1S,2R)-1-C-(indol-3-yl)glycerol 3-phosphate + L-serine = D-glyceraldehyde 3-phosphate + L-tryptophan + H2O. It functions in the pathway amino-acid biosynthesis; L-tryptophan biosynthesis; L-tryptophan from chorismate: step 5/5. Its function is as follows. The beta subunit is responsible for the synthesis of L-tryptophan from indole and L-serine. The sequence is that of Tryptophan synthase beta chain from Thermoanaerobacter sp. (strain X514).